The chain runs to 135 residues: Small ribosomal subunit protein bS6 (135 aa).

The interval 104–135 (FSRLDRNGHIGHDEKHPRSPSRQREDVIEGVE) is disordered.

This sequence belongs to the bacterial ribosomal protein bS6 family.

Binds together with bS18 to 16S ribosomal RNA. This chain is Small ribosomal subunit protein bS6, found in Bartonella henselae (strain ATCC 49882 / DSM 28221 / CCUG 30454 / Houston 1) (Rochalimaea henselae).